The primary structure comprises 330 residues: MSRQTDMDPGTYVPDIGGLRFWDMWKEVVFVFVNDTKQKHGGGSETGAGAFFPQYSKYPAMAARSKTKFLGELLILSRFHKYNPVFTTFAGDRTISTAFVFQQTALCVLAAYLFCGAGMVWNDWIDRDIDAKVARTKHRPLAMGSVTTTEAMVWMTLQVIMSWGVLRVMLDNKDVLKHLIPVMVASVLYPFGKRYLARKLMIYPQYILAFTIAWPAIPGRAAICGRHESFTETTRQCLPLCIMVFFWTIYLNTAYSYQDVVDDRKLKVNSFYNIAGNHIHVLLVLLVSPIILAQFDPKQPASGGTLHKSNFILGVWTILACAAEVFLTSA.

An N-linked (GlcNAc...) asparagine glycan is attached at Asn34. 7 helical membrane-spanning segments follow: residues 105–125 (ALCV…NDWI), 146–166 (VTTT…WGVL), 175–192 (VLKH…YPFG), 199–219 (KLMI…AIPG), 237–257 (CLPL…AYSY), 273–293 (NIAG…IILA), and 310–330 (NFIL…LTSA).

This sequence belongs to the UbiA prenyltransferase family. Mg(2+) serves as cofactor.

The protein localises to the membrane. It participates in secondary metabolite biosynthesis; terpenoid biosynthesis. In terms of biological role, polyprenyl transferase; part of the gene cluster that mediates the biosynthesis of diterpenoid pyrones. The first step of the pathway is the synthesis of the alpha-pyrone moiety by the polyketide synthase dpfgA via condensation of one acetyl-CoA starter unit with 3 malonyl-CoA units and 2 methylations. The alpha-pyrone is then combined with geranylgeranyl pyrophosphate (GGPP) formed by the GGPP synthase dpfgD through the action of the prenyltransferase dpfgC to yield a linear alpha-pyrone diterpenoid. Subsequent steps in the diterpenoid pyrone biosynthetic pathway involve the decalin core formation, which is initiated by the epoxidation of the C10-C11 olefin by the FAD-dependent oxidoreductase dpfgE, and is followed by a cyclization cascade catalyzed by the terpene cyclase dpfgB. The short chain dehydrogenase/reductase dpfgG then oxidizes the 8S hydroxy group to a ketone and the short chain dehydrogenase/reductase dpfgH reduces the ketone to the 8R hydroxy group to yield higginsianin B. Higginsianin B is further methylated by the methyltransferase dpfgI to produce the intermediate named FDDP B. The cytochrome P450 monooxygenase dfgpJ then catalyzes a three-step oxidation at C-27 to generate a carboxylic acid as well as C-26 hydroxylation. Finally, methyltransferase dpfgK methylates the carboxylic acid generated by dpfgJ, yielding the final diterpenoid pyrones from the pathway which were named FDDP D and FDDP E. This is Polyprenyl transferase dpfgC from Gibberella zeae (strain ATCC MYA-4620 / CBS 123657 / FGSC 9075 / NRRL 31084 / PH-1) (Wheat head blight fungus).